The chain runs to 101 residues: Large ribosomal subunit protein bL21 (101 aa).

This sequence belongs to the bacterial ribosomal protein bL21 family. As to quaternary structure, part of the 50S ribosomal subunit. Contacts protein L20.

This protein binds to 23S rRNA in the presence of protein L20. The chain is Large ribosomal subunit protein bL21 from Corynebacterium diphtheriae (strain ATCC 700971 / NCTC 13129 / Biotype gravis).